The primary structure comprises 469 residues: Acyltransferase clz18 (469 aa).

A run of 7 helical transmembrane segments spans residues Gly21 to Asp41, Leu70 to Phe90, Leu134 to Phe154, Ile253 to Trp273, Gly346 to Leu366, Ile391 to Trp411, and Val424 to Phe444.

It belongs to the acyltransferase 3 family.

It is found in the membrane. It functions in the pathway secondary metabolite biosynthesis. In terms of biological role, acyltransferase; part of the gene cluster that mediates the biosynthesis of squalestatin S1 (SQS1, also known as zaragozic acid A), a heavily oxidized fungal polyketide that offers potent cholesterol lowering activity by targeting squalene synthase (SS). SQS1 is composed of a 2,8-dioxobicyclic[3.2.1]octane-3,4,5-tricarboxyclic acid core that is connected to two lipophilic polyketide arms. These initial steps feature the priming of an unusual benzoic acid starter unit onto the highly reducing polyketide synthase clz14, followed by oxaloacetate extension and product release to generate a tricarboxylic acid containing product. The phenylalanine ammonia lyase (PAL) clz10 and the acyl-CoA ligase clz12 are involved in transforming phenylalanine into benzoyl-CoA. The citrate synthase-like protein clz17 is involved in connecting the C-alpha-carbons of the hexaketide chain and oxaloacetate to afford the tricarboxylic acid unit. The potential hydrolytic enzymes, clz11 and clz13, are in close proximity to pks2 and may participate in product release. On the other side, the tetraketide arm is synthesized by a the squalestatin tetraketide synthase clz2 and enzymatically esterified to the core in the last biosynthetic step, by the acetyltransferase clz6. The biosynthesis of the tetraketide must involve 3 rounds of chain extension. After the first and second rounds methyl-transfer occurs, and in all rounds of extension the ketoreductase and dehydratase are active. The enoyl reductase and C-MeT of clz2 are not active in the final round of extension. The acetyltransferase clz6 appears to have a broad substrate selectivity for its acyl CoA substrate, allowing the in vitro synthesis of novel squalestatins. The biosynthesis of SQS1 requires several oxidative steps likely performed by oxidoreductases clz3, clz15 and clz16. Finally, in support of the identification of the cluster as being responsible for SQS1 production, the cluster contains a gene encoding a putative squalene synthase (SS) clz20, suggesting a likely mechanism for self-resistance. This Cochliobolus lunatus (Filamentous fungus) protein is Acyltransferase clz18.